The chain runs to 405 residues: L-rhamnonate dehydratase (405 aa).

Residues histidine 33 and arginine 59 each coordinate substrate. Residues aspartate 226, glutamate 252, and glutamate 280 each contribute to the Mg(2+) site. Histidine 329 acts as the Proton acceptor in catalysis. Glutamate 349 contributes to the substrate binding site.

The protein belongs to the mandelate racemase/muconate lactonizing enzyme family. RhamD subfamily. Homooctamer; tetramer of dimers. It depends on Mg(2+) as a cofactor.

It catalyses the reaction L-rhamnonate = 2-dehydro-3-deoxy-L-rhamnonate + H2O. In terms of biological role, catalyzes the dehydration of L-rhamnonate to 2-keto-3-deoxy-L-rhamnonate (KDR). The polypeptide is L-rhamnonate dehydratase (Escherichia coli O81 (strain ED1a)).